Here is a 280-residue protein sequence, read N- to C-terminus: RNA polymerase II holoenzyme cyclin-like subunit (280 aa).

One can recognise a Cyclin N-terminal domain in the interval 23 to 150 (ERRKGLEDIF…LIEELGTYLV (128 aa)).

It belongs to the cyclin family. Cyclin C subfamily. In terms of assembly, component of the SRB8-11 complex, a regulatory module of the Mediator complex.

The protein resides in the nucleus. In terms of biological role, component of the SRB8-11 complex. The SRB8-11 complex is a regulatory module of the Mediator complex which is itself involved in regulation of basal and activated RNA polymerase II-dependent transcription. The SRB8-11 complex may be involved in the transcriptional repression of a subset of genes regulated by Mediator. It may inhibit the association of the Mediator complex with RNA polymerase II to form the holoenzyme complex. The SRB8-11 complex phosphorylates the C-terminal domain (CTD) of the largest subunit of RNA polymerase II. The protein is RNA polymerase II holoenzyme cyclin-like subunit (SSN8) of Yarrowia lipolytica (strain CLIB 122 / E 150) (Yeast).